The sequence spans 298 residues: Glutamyl-Q tRNA(Asp) synthetase (298 aa).

L-glutamate-binding positions include 9 to 13 and Glu-45; that span reads RFAPS. The short motif at 12–22 is the 'HIGH' region element; that stretch reads PSPSGELHFGS. 4 residues coordinate Zn(2+): Cys-101, Cys-103, Tyr-115, and Cys-119. Tyr-172 and Arg-190 together coordinate L-glutamate. The 'KMSKS' region signature appears at 228-232; the sequence is KLSKQ. ATP is bound at residue Lys-231.

It belongs to the class-I aminoacyl-tRNA synthetase family. GluQ subfamily. The cofactor is Zn(2+).

Functionally, catalyzes the tRNA-independent activation of glutamate in presence of ATP and the subsequent transfer of glutamate onto a tRNA(Asp). Glutamate is transferred on the 2-amino-5-(4,5-dihydroxy-2-cyclopenten-1-yl) moiety of the queuosine in the wobble position of the QUC anticodon. The protein is Glutamyl-Q tRNA(Asp) synthetase of Salmonella typhimurium (strain LT2 / SGSC1412 / ATCC 700720).